A 249-amino-acid polypeptide reads, in one-letter code: Eukaryotic translation initiation factor 3 subunit K (249 aa).

The region spanning phenylalanine 46 to glutamate 222 is the PCI domain.

This sequence belongs to the eIF-3 subunit K family. Component of the eukaryotic translation initiation factor 3 (eIF-3) complex.

The protein localises to the cytoplasm. In terms of biological role, component of the eukaryotic translation initiation factor 3 (eIF-3) complex, which is involved in protein synthesis of a specialized repertoire of mRNAs and, together with other initiation factors, stimulates binding of mRNA and methionyl-tRNAi to the 40S ribosome. The eIF-3 complex specifically targets and initiates translation of a subset of mRNAs involved in cell proliferation. The sequence is that of Eukaryotic translation initiation factor 3 subunit K from Aspergillus fumigatus (strain CBS 144.89 / FGSC A1163 / CEA10) (Neosartorya fumigata).